The sequence spans 160 residues: Envelope glycoprotein L (160 aa).

A signal peptide spans 1-22 (MASHKWLLQMIVFLKTITIAYC). The tract at residues 24–149 (HLQDDTPLFF…TNIPENGCVW (126 aa)) is interaction with gH. The 133-residue stretch at 28–160 (DTPLFFGAKP…ADRLFQRVCQ (133 aa)) folds into the gL alphaherpesvirus-type domain. 2 disulfide bridges follow: Cys49–Cys80 and Cys147–Cys159.

Belongs to the herpesviridae glycoprotein L (gL) family. Alphaherpesvirinae gL subfamily. In terms of assembly, interacts with glycoprotein H (gH); this interaction is necessary for the correct processing and cell surface expression of gH. The heterodimer gH/gL seems to interact with gB trimers during fusion.

It is found in the virion membrane. The protein resides in the host cell membrane. It localises to the host Golgi apparatus. Its subcellular location is the host trans-Golgi network. The heterodimer glycoprotein H-glycoprotein L is required for the fusion of viral and plasma membranes leading to virus entry into the host cell. Acts as a functional inhibitor of gH and maintains gH in an inhibited form. Upon binding to host integrins, gL dissociates from gH leading to activation of the viral fusion glycoproteins gB and gH. This is Envelope glycoprotein L from Varicella-zoster virus (strain Oka vaccine) (HHV-3).